The primary structure comprises 761 residues: Probable beta-galactosidase 2 (761 aa).

A signal peptide spans 1 to 23 (MGTIKNNFQLLWLILLIVVLVNG). N-linked (GlcNAc...) asparagine glycosylation is found at Asn-39 and Asn-110. Residue Glu-195 is the Proton donor of the active site. Asn-206 carries an N-linked (GlcNAc...) asparagine glycan. Glu-267 acts as the Nucleophile in catalysis. N-linked (GlcNAc...) asparagine glycans are attached at residues Asn-385, Asn-405, Asn-438, Asn-501, Asn-552, Asn-553, Asn-577, Asn-592, Asn-642, Asn-690, and Asn-696.

The protein belongs to the glycosyl hydrolase 35 family.

The enzyme catalyses Hydrolysis of terminal non-reducing beta-D-galactose residues in beta-D-galactosides.. Cleaves beta-linked terminal galactosyl residues from gangliosides, glycoproteins, and glycosaminoglycans. The polypeptide is Probable beta-galactosidase 2 (glb2) (Dictyostelium discoideum (Social amoeba)).